Consider the following 926-residue polypeptide: Armadillo repeat-containing protein 5 (926 aa).

The segment covering 82 to 104 has biased composition (low complexity); that stretch reads PAPSQAASGSAPSSVASAGSTPG. Residues 82 to 111 form a disordered region; sequence PAPSQAASGSAPSSVASAGSTPGHAPAAES. ARM repeat units lie at residues 139–179, 181–221, 223–263, 267–306, 307–354, 355–399, and 401–440; these read GACR…NLAM, PESC…NLAD, PQHR…ELSR, RACA…NLCA, QGLV…LCRE, AINR…DTGA, and GKLQ…EERT. Ser-337 bears the Phosphoserine mark. A disordered region spans residues 472 to 516; that stretch reads WSPERCPMPEPSESVSPTPGQTSMSTPRTLRKPGRIPAATPEEPW. The span at 484 to 499 shows a compositional bias: polar residues; the sequence is ESVSPTPGQTSMSTPR. The BTB domain occupies 745–813; that stretch reads PDLHFVLDSG…LHGCRGCGAA (69 aa).

Substrate-recognition component of the BCR(ARMC5) E3 ubiquitin ligase complex, at least composed of CUL3, ARMC5 and RBX1. In terms of processing, ubiquitinated by a BCR (BTB-CUL3-RBX1) E3 ubiquitin ligase complex, leading to its degradation. Deubiquitinated by USP7. Expression is high in the thymus, stomach, bone marrow and lymphatic tissues (including lymph nodes and intestinal wall). Also expressed in the adrenal gland, skin and in brain structures, with noticeable levels found in the cerebellum.

It is found in the nucleus. The protein resides in the chromosome. The protein localises to the cytoplasm. It participates in protein modification; protein ubiquitination. In terms of biological role, substrate-recognition component of a BCR (BTB-CUL3-RBX1) E3 ubiquitin ligase complex that terminates RNA polymerase II (Pol II) transcription in the promoter-proximal region of genes. The BCR(ARMC5) complex provides a quality checkpoint during transcription elongation by driving premature transcription termination of transcripts that are unfavorably configured for transcriptional elongation: the BCR(ARMC5) complex acts by mediating ubiquitination of Pol II subunit POLR2A phosphorylated at 'Ser-5' of the C-terminal domain (CTD), leading to POLR2A degradation. The BCR(ARMC5) complex acts in parallel of the integrator complex and is specific for RNA Pol II originating from the promoter-proximal zone: it does not ubiquitinate elongation-stalled RNA Pol II. The BCR(ARMC5) complex also acts as a regulator of fatty acid desaturation by mediating ubiquitination and degradation of SCAP-free SREBF1 and SREBF2. Involved in fetal development, T-cell function and adrenal gland growth homeostasis. Plays a role in steroidogenesis, modulates steroidogenic enzymes expression and cortisol production. In Mus musculus (Mouse), this protein is Armadillo repeat-containing protein 5.